We begin with the raw amino-acid sequence, 209 residues long: Flavin prenyltransferase UbiX (209 aa).

FMN-binding positions include 13-15 (GAS), serine 39, 104-107 (STGT), cysteine 116, and arginine 139. Positions 169 and 185 each coordinate dimethylallyl phosphate.

This sequence belongs to the UbiX/PAD1 family.

The catalysed reaction is dimethylallyl phosphate + FMNH2 = prenylated FMNH2 + phosphate. Functionally, flavin prenyltransferase that catalyzes the synthesis of the prenylated FMN cofactor (prenyl-FMN) for 4-hydroxy-3-polyprenylbenzoic acid decarboxylase UbiD. The prenyltransferase is metal-independent and links a dimethylallyl moiety from dimethylallyl monophosphate (DMAP) to the flavin N5 and C6 atoms of FMN. The chain is Flavin prenyltransferase UbiX from Pseudomonas aeruginosa (strain ATCC 15692 / DSM 22644 / CIP 104116 / JCM 14847 / LMG 12228 / 1C / PRS 101 / PAO1).